A 423-amino-acid chain; its full sequence is Steroid hormone receptor ERR1 (423 aa).

Residues 1–67 (MSSQVVGIEP…GAGPGEQGGG (67 aa)) are disordered. The interval 1-76 (MSSQVVGIEP…GKLVLSSLPK (76 aa)) is repressor domain. K14 participates in a covalent cross-link: Glycyl lysine isopeptide (Lys-Gly) (interchain with G-Cter in SUMO). A phosphoserine mark is found at S19 and S22. Residues 58 to 67 (GAGPGEQGGG) show a composition bias toward gly residues. Residues 76–151 (KRLCLVCGDV…VGMLKEGVRL (76 aa)) constitute a DNA-binding region (nuclear receptor). 2 consecutive NR C4-type zinc fingers follow at residues 79–99 (CLVCGDVASGYHYGVASCEAC) and 115–134 (CPASNECEITKRRRKACQAC). N6-acetyllysine; by PCAF/KAT2B is present on residues K129, K138, K160, and K162. Residue K189 forms a Glycyl lysine isopeptide (Lys-Gly) (interchain with G-Cter in SUMO2) linkage. Residues 193 to 421 (PVNALVSHLL…KLFLEMLEAM (229 aa)) form the NR LBD domain. Residue K403 forms a Glycyl lysine isopeptide (Lys-Gly) (interchain with G-Cter in SUMO); alternate linkage. K403 participates in a covalent cross-link: Glycyl lysine isopeptide (Lys-Gly) (interchain with G-Cter in SUMO2); alternate. The tract at residues 403–423 (KLEGKVPMHKLFLEMLEAMMD) is AF-2 domain.

Belongs to the nuclear hormone receptor family. NR3 subfamily. In terms of assembly, binds DNA as a monomer or a homodimer. Interacts (via the AF2 domain) with coactivator PPARGC1A (via the L3 motif); the interaction greatly enhances transcriptional activity of genes involved in energy metabolism. Interacts with PIAS4; the interaction enhances sumoylation. Interacts with MAPK15; promotes re-localization of ESRRA to the cytoplasm through a XPO1-dependent mechanism then inhibits ESRRA transcriptional activity. Phosphorylation on Ser-19 enhances sumoylation on Lys-14 increasing repression of transcriptional activity. In terms of processing, sumoylated with SUMO2. Main site is Lys-14 which is enhanced by phosphorylation on Ser-19, cofactor activation, and by interaction with PIAS4. Sumoylation enhances repression of transcriptional activity, but has no effect on subcellular location nor on DNA binding. Post-translationally, reversibly acetylated. Acetylation by PCAF/KAT2 at Lys-129, Lys-138, Lys-160 and Lys-162 and PCAF/KAT2 decreases transcriptional activity probably by inhibiting DNA-binding activity; deacetylation involves SIRT1 and HDAC8 and increases DNA-binding.

It localises to the nucleus. The protein localises to the cytoplasm. Functionally, binds to an ERR-alpha response element (ERRE) containing a single consensus half-site, 5'-TNAAGGTCA-3'. Can bind to the medium-chain acyl coenzyme A dehydrogenase (MCAD) response element NRRE-1 and may act as an important regulator of MCAD promoter. Binds to the C1 region of the lactoferrin gene promoter. Requires dimerization and the coactivator, PGC-1A, for full activity. The ERRalpha/PGC1alpha complex is a regulator of energy metabolism. Induces the expression of PERM1 in the skeletal muscle. This is Steroid hormone receptor ERR1 (ESRRA) from Homo sapiens (Human).